Here is a 293-residue protein sequence, read N- to C-terminus: MTAQILDGKATAAAIKSDLTVRVAALKAQGITPGLGTLLVGDDPGSRWYVNGKHRDCAQVGIGSIQRELPDTATQEEIEEVVRELNANPECTGYIVQLPLPKGIDTNRVLELMDPEKDADGLHPMSLGRLVLNETGPLPCTPQGVVQLLRAHGVEINGAHVVVVGRGVTIGRSIPLLLTRKSENATVTQCHTGTRDLSSHLRQADIIVAAAGVQHLIKPEDVKPGAAVLDVGVSRDADGKIVGDVHPGVREVAAWVAPNPGGVGPMTRAQLLVNVVEAAERAAAEAADAAAAG.

NADP(+) is bound by residues 165–167, T192, and V233; that span reads GRG.

It belongs to the tetrahydrofolate dehydrogenase/cyclohydrolase family. As to quaternary structure, homodimer.

The catalysed reaction is (6R)-5,10-methylene-5,6,7,8-tetrahydrofolate + NADP(+) = (6R)-5,10-methenyltetrahydrofolate + NADPH. The enzyme catalyses (6R)-5,10-methenyltetrahydrofolate + H2O = (6R)-10-formyltetrahydrofolate + H(+). The protein operates within one-carbon metabolism; tetrahydrofolate interconversion. In terms of biological role, catalyzes the oxidation of 5,10-methylenetetrahydrofolate to 5,10-methenyltetrahydrofolate and then the hydrolysis of 5,10-methenyltetrahydrofolate to 10-formyltetrahydrofolate. This Streptomyces griseus subsp. griseus (strain JCM 4626 / CBS 651.72 / NBRC 13350 / KCC S-0626 / ISP 5235) protein is Bifunctional protein FolD.